The chain runs to 202 residues: MSRYRGPRLRVTRRLGELPGLTRKASKKSNPPGQHGQARRKRSEYAIRLEEKQKLRFNYGVSEKQLVRYVKKARAQEGSTGTNLLRLLENRLDNVCFRLGFGGTIPGSRQLVNHGHVTVNGKVLDIAGYQCKSGDVIGIKENKASKKLVEGNIEFPGLANVPPHLDLDKPKLTGKITGKCDREWVALEINELLVVEYYSRKV.

The span at 1-13 (MSRYRGPRLRVTR) shows a compositional bias: basic residues. The tract at residues 1–42 (MSRYRGPRLRVTRRLGELPGLTRKASKKSNPPGQHGQARRKR) is disordered. In terms of domain architecture, S4 RNA-binding spans 90–152 (NRLDNVCFRL…KASKKLVEGN (63 aa)).

Belongs to the universal ribosomal protein uS4 family. As to quaternary structure, part of the 30S ribosomal subunit. Contacts protein S5. The interaction surface between S4 and S5 is involved in control of translational fidelity.

In terms of biological role, one of the primary rRNA binding proteins, it binds directly to 16S rRNA where it nucleates assembly of the body of the 30S subunit. Its function is as follows. With S5 and S12 plays an important role in translational accuracy. This chain is Small ribosomal subunit protein uS4, found in Prochlorococcus marinus (strain MIT 9312).